Reading from the N-terminus, the 146-residue chain is Large ribosomal subunit protein uL22 (146 aa).

Residues 1–39 (MAETQTTTPKKKAERRAPPPARARKNRPAAPAPGPHASL) form a disordered region.

The protein belongs to the universal ribosomal protein uL22 family. In terms of assembly, part of the 50S ribosomal subunit.

Functionally, this protein binds specifically to 23S rRNA; its binding is stimulated by other ribosomal proteins, e.g. L4, L17, and L20. It is important during the early stages of 50S assembly. It makes multiple contacts with different domains of the 23S rRNA in the assembled 50S subunit and ribosome. The globular domain of the protein is located near the polypeptide exit tunnel on the outside of the subunit, while an extended beta-hairpin is found that lines the wall of the exit tunnel in the center of the 70S ribosome. This Anaeromyxobacter dehalogenans (strain 2CP-1 / ATCC BAA-258) protein is Large ribosomal subunit protein uL22.